Reading from the N-terminus, the 1106-residue chain is DNA polymerase delta catalytic subunit (1106 aa).

Residues 1-28 (MDGKRRPGPGPGVPPKRARGGLWDEDEA) are disordered. Residues 4–19 (KRRPGPGPGVPPKRAR) carry the Nuclear localization signal motif. Arg-19 is subject to Omega-N-methylarginine. Lys-573 participates in a covalent cross-link: Glycyl lysine isopeptide (Lys-Gly) (interchain with G-Cter in SUMO2). The Zn(2+) site is built by Cys-1011, Cys-1014, Cys-1025, and Cys-1028. The CysA-type zinc-finger motif lies at 1011 to 1028 (CIGCRTVLSHQGAVCKFC). Cys-1057, Cys-1060, Cys-1070, and Cys-1075 together coordinate [4Fe-4S] cluster. The CysB motif motif lies at 1057–1075 (CQRCQGSLHEDVICTSRDC).

This sequence belongs to the DNA polymerase type-B family. In terms of assembly, component of the tetrameric DNA polymerase delta complex (Pol-delta4), which consists of POLD1/p125, POLD2/p50, POLD3/p66/p68 and POLD4/p12, with POLD1 bearing both DNA polymerase and 3' to 5' proofreading exonuclease activities. Within Pol-delta4, directly interacts with POLD2 and POLD4. Following genotoxic stress by DNA-damaging agents, such as ultraviolet light and methyl methanesulfonate, or by replication stress induced by treatment with hydroxyurea or aphidicolin, Pol-delta4 is converted into a trimeric form of the complex (Pol-delta3) by POLD4 degradation. Pol-delta3 is the major form at S phase replication sites and DNA damage sites. POLD1 displays different catalytic properties depending upon the complex it is found in. It exhibits higher proofreading activity and fidelity than Pol-delta4, making it particularly well suited to respond to DNA damage. Directly interacts with PCNA, as do POLD3 and POLD4; this interaction stimulates Pol-delta4 polymerase activity. As POLD2 and POLD4, directly interacts with WRNIP1; this interaction stimulates DNA polymerase delta-mediated DNA synthesis, independently of the presence of PCNA. This stimulation may be due predominantly to an increase of initiation frequency and also to increased processivity. Also observed as a dimeric complex with POLD2 (Pol-delta2). Pol-delta2 is relatively insensitive to the PCNA stimulation (2-5-fold) compared to Pol-delta4 that is stimulated by over 50-fold. Interacts with POLDIP2; this interaction is indirect and most probably mediated through POLD2-binding. Interacts with CIAO1. Interacts with POLDIP2. Interacts with RFC1. [4Fe-4S] cluster serves as cofactor.

It localises to the nucleus. The catalysed reaction is DNA(n) + a 2'-deoxyribonucleoside 5'-triphosphate = DNA(n+1) + diphosphate. Regulated by alteration of quaternary structure. Exhibits burst rates of DNA synthesis are about 5 times faster in the presence of POLD4 (Pol-delta4 complex) than in its absence (Pol-delta3 complex), while the affinity of the enzyme for its DNA and dNTP substrates appears unchanged. The Pol-delta3 complex is more likely to proofread DNA synthesis because it cleaves single-stranded DNA twice as fast and transfers mismatched DNA from the polymerase to the exonuclease sites 9 times faster compared to the Pol-delta3 complex. Pol-delta3 also extends mismatched primers 3 times more slowly in the absence of POLD4. The conversion of Pol-delta4 into Pol-delta3 is induced by genotoxic stress or by replication stress leading POLD4 degradation. Stimulated in the presence of PCNA. This stimulation is further increased in the presence of KCTD13/PDIP1, most probably via direct interaction between KCTD13 and POLD2. In terms of biological role, as the catalytic component of the trimeric (Pol-delta3 complex) and tetrameric DNA polymerase delta complexes (Pol-delta4 complex), plays a crucial role in high fidelity genome replication, including in lagging strand synthesis, and repair. Exhibits both DNA polymerase and 3'- to 5'-exonuclease activities. Requires the presence of accessory proteins POLD2, POLD3 and POLD4 for full activity. Depending upon the absence (Pol-delta3) or the presence of POLD4 (Pol-delta4), displays differences in catalytic activity. Most notably, expresses higher proofreading activity in the context of Pol-delta3 compared with that of Pol-delta4. Although both Pol-delta3 and Pol-delta4 process Okazaki fragments in vitro, Pol-delta3 may be better suited to fulfill this task, exhibiting near-absence of strand displacement activity compared to Pol-delta4 and stalling on encounter with the 5'-blocking oligonucleotides. Pol-delta3 idling process may avoid the formation of a gap, while maintaining a nick that can be readily ligated. Along with DNA polymerase kappa, DNA polymerase delta carries out approximately half of nucleotide excision repair (NER) synthesis following UV irradiation. Under conditions of DNA replication stress, in the presence of POLD3 and POLD4, may catalyze the repair of broken replication forks through break-induced replication (BIR). Involved in the translesion synthesis (TLS) of templates carrying O6-methylguanine, 8oxoG or abasic sites. This chain is DNA polymerase delta catalytic subunit (POLD1), found in Bos taurus (Bovine).